We begin with the raw amino-acid sequence, 234 residues long: Purine nucleoside phosphorylase DeoD-type (234 aa).

Histidine 4 lines the a purine D-ribonucleoside pocket. Residues glycine 20, arginine 24, arginine 43, and 87–90 (RIGT) contribute to the phosphate site. A purine D-ribonucleoside-binding positions include 179 to 181 (EME) and 203 to 204 (SD). Aspartate 204 acts as the Proton donor in catalysis.

This sequence belongs to the PNP/UDP phosphorylase family. As to quaternary structure, homohexamer; trimer of homodimers.

It catalyses the reaction a purine D-ribonucleoside + phosphate = a purine nucleobase + alpha-D-ribose 1-phosphate. The catalysed reaction is a purine 2'-deoxy-D-ribonucleoside + phosphate = a purine nucleobase + 2-deoxy-alpha-D-ribose 1-phosphate. Its function is as follows. Catalyzes the reversible phosphorolytic breakdown of the N-glycosidic bond in the beta-(deoxy)ribonucleoside molecules, with the formation of the corresponding free purine bases and pentose-1-phosphate. The chain is Purine nucleoside phosphorylase DeoD-type from Helicobacter pylori (strain Shi470).